A 311-amino-acid polypeptide reads, in one-letter code: Methionyl-tRNA formyltransferase (311 aa).

112-115 is a (6S)-5,6,7,8-tetrahydrofolate binding site; the sequence is SLLP.

It belongs to the Fmt family.

It carries out the reaction L-methionyl-tRNA(fMet) + (6R)-10-formyltetrahydrofolate = N-formyl-L-methionyl-tRNA(fMet) + (6S)-5,6,7,8-tetrahydrofolate + H(+). Attaches a formyl group to the free amino group of methionyl-tRNA(fMet). The formyl group appears to play a dual role in the initiator identity of N-formylmethionyl-tRNA by promoting its recognition by IF2 and preventing the misappropriation of this tRNA by the elongation apparatus. In Chelativorans sp. (strain BNC1), this protein is Methionyl-tRNA formyltransferase.